A 991-amino-acid chain; its full sequence is Pentatricopeptide repeat-containing protein At1g73710 (991 aa).

Disordered regions lie at residues 1 to 27 and 61 to 81; these read MLQPSPPHYSSSRDVRHHHHHHHHHHH and SSSSVSPPRCSKPNPSSRKRK. The segment covering 15–27 has biased composition (basic residues); it reads VRHHHHHHHHHHH. Low complexity predominate over residues 61–73; sequence SSSSVSPPRCSKP. PPR repeat units lie at residues 144–178, 179–213, 214–248, 304–338, 339–373, 374–408, 409–443, 444–474, 478–513, 514–548, 549–583, 584–618, 619–653, 654–688, 689–719, 723–757, 758–792, 862–896, and 897–931; these read NVIHYNIVLRALGRAGKWDELRLCWIEMAHNGVLP, TNNTYGMLVDVYGKAGLVKEALLWIKHMGQRMHFP, DEVTMATVVRVFKNSGEFDRADRFFKGWCAGKVDL, LTSTFNTLIDLYGKAGRLNDAANLFSEMLKSGVPI, DTVTFNTMIHTCGTHGHLSEAESLLKKMEEKGISP, DTKTYNILLSLHADAGDIEAALEYYRKIRKVGLFP, DTVTHRAVLHILCQRKMVAEVEAVIAEMDRNSIRI, DEHSVPVIMQMYVNEGLVVQAKALFERFQLD, SSTTLAAVIDVYAEKGLWVEAETVFYGKRNMSGQRN, DVLEYNVMIKAYGKAKLHEKALSLFKGMKNQGTWP, DECTYNSLFQMLAGVDLVDEAQRILAEMLDSGCKP, GCKTYAAMIASYVRLGLLSDAVDLYEAMEKTGVKP, NEVVYGSLINGFAESGMVEEAIQYFRMMEEHGVQS, NHIVLTSLIKAYSKVGCLEEARRVYDKMKDSEGGP, DVAASNSMLSLCADLGIVSEAESIFNALREK, DVISFATMMYLYKGMGMLDEAIEVAEEMRESGLLS, DCTSFNQVMACYAADGQLSECCELFHEMLVERKLL, EHFAYNAVIYTYSASGDIDMALKAYMRMQEKGLEP, and DIVTQAYLVGIYGKAGMVEGVKRVHSRLTFGELEP. A compositionally biased stretch (basic and acidic residues) spans 965 to 974; that stretch reads AERECSSRSG. The segment at 965–991 is disordered; sequence AERECSSRSGEEEEDDEEENSEEDEAF. Acidic residues predominate over residues 975–991; the sequence is EEEEDDEEENSEEDEAF.

The protein belongs to the PPR family. P subfamily.

This is Pentatricopeptide repeat-containing protein At1g73710 from Arabidopsis thaliana (Mouse-ear cress).